The chain runs to 149 residues: Myosin light chain 1 (149 aa).

EF-hand domains are found at residues 2–37 (SATRANKDIFTLFDKKGQGAIAKDSLGDYLRAIGYN), 81–116 (AKTEDFVKAFQVFDKESTGKVSVGDLRYMLTGLGEK), and 117–149 (LTDAEVDELLKGVEVDSNGEIDYKKFIEDVLRQ). Residues Asp-15, Asp-94, Thr-98, Lys-100, and Asp-105 each coordinate Ca(2+). Residue Lys-116 forms a Glycyl lysine isopeptide (Lys-Gly) (interchain with G-Cter in ubiquitin) linkage. Asp-123, Lys-127, and Asp-132 together coordinate Ca(2+).

Interacts with MYO1, MYO2 and IQG1 by binding to their IQ domains. Interacts with SEC4.

It localises to the bud neck. The protein localises to the bud tip. Essential light chain for the class II conventional myosin MYO1. Also acts as light chain for the class V unconventional myosin MYO2 and for IQG1. Involved in the assembly of the contractile actomyosin ring at the bud neck during cytokinesis by recruiting IQG1 to the bud neck. Also required for chitin and MYO2-dependent secretory vesicle deposition to the center of the bud neck for septum formation. May stabilize MYO2 by binding to its IQ domains. Its major function is probably not to regulate MYO1 activity, but rather to coordinate actin ring formation and targeted membrane deposition during cytokinesis via its interactions with MYO1, IQG1 and MYO2. The chain is Myosin light chain 1 (MLC1) from Saccharomyces cerevisiae (strain ATCC 204508 / S288c) (Baker's yeast).